The chain runs to 102 residues: Large ribosomal subunit protein bL21 (102 aa).

The protein belongs to the bacterial ribosomal protein bL21 family. In terms of assembly, part of the 50S ribosomal subunit. Contacts protein L20.

This protein binds to 23S rRNA in the presence of protein L20. The sequence is that of Large ribosomal subunit protein bL21 from Enterococcus faecalis (strain ATCC 700802 / V583).